The following is a 156-amino-acid chain: Small ribosomal subunit protein uS7 (156 aa).

It belongs to the universal ribosomal protein uS7 family. In terms of assembly, part of the 30S ribosomal subunit. Contacts proteins S9 and S11.

Functionally, one of the primary rRNA binding proteins, it binds directly to 16S rRNA where it nucleates assembly of the head domain of the 30S subunit. Is located at the subunit interface close to the decoding center, probably blocks exit of the E-site tRNA. In Bifidobacterium longum subsp. infantis (strain ATCC 15697 / DSM 20088 / JCM 1222 / NCTC 11817 / S12), this protein is Small ribosomal subunit protein uS7.